A 31-amino-acid polypeptide reads, in one-letter code: Conotoxin pc6d (31 aa).

3 disulfides stabilise this stretch: Cys-2–Cys-20, Cys-9–Cys-25, and Cys-19–Cys-29.

The protein belongs to the conotoxin O1 superfamily. Expressed by the venom duct.

The protein localises to the secreted. This chain is Conotoxin pc6d, found in Conus pictus (Cone snail).